A 289-amino-acid chain; its full sequence is Membrane protein insertase YidC (289 aa).

Positions Met-1–Gly-19 are cleaved as a signal peptide. Cys-20 carries N-palmitoyl cysteine lipidation. Residue Cys-20 is the site of S-diacylglycerol cysteine attachment. 5 helical membrane-spanning segments follow: residues Tyr-55 to Leu-75, Met-133 to Leu-153, Ile-177 to Ser-197, Met-210 to Leu-230, and Tyr-231 to Ser-251. The interval Glu-268–Lys-289 is disordered.

This sequence belongs to the OXA1/ALB3/YidC family. Type 2 subfamily.

It is found in the cell membrane. Its function is as follows. Required for the insertion and/or proper folding and/or complex formation of integral membrane proteins into the membrane. Involved in integration of membrane proteins that insert both dependently and independently of the Sec translocase complex, as well as at least some lipoproteins. The polypeptide is Membrane protein insertase YidC (Staphylococcus carnosus (strain TM300)).